The primary structure comprises 333 residues: Lipoyl synthase (333 aa).

The [4Fe-4S] cluster site is built by C56, C61, C67, C82, C86, C89, and S293. Positions W68–S282 constitute a Radical SAM core domain. The interval Q301–W333 is disordered. Low complexity predominate over residues M314 to S325.

It belongs to the radical SAM superfamily. Lipoyl synthase family. [4Fe-4S] cluster is required as a cofactor.

It localises to the cytoplasm. It carries out the reaction [[Fe-S] cluster scaffold protein carrying a second [4Fe-4S](2+) cluster] + N(6)-octanoyl-L-lysyl-[protein] + 2 oxidized [2Fe-2S]-[ferredoxin] + 2 S-adenosyl-L-methionine + 4 H(+) = [[Fe-S] cluster scaffold protein] + N(6)-[(R)-dihydrolipoyl]-L-lysyl-[protein] + 4 Fe(3+) + 2 hydrogen sulfide + 2 5'-deoxyadenosine + 2 L-methionine + 2 reduced [2Fe-2S]-[ferredoxin]. The protein operates within protein modification; protein lipoylation via endogenous pathway; protein N(6)-(lipoyl)lysine from octanoyl-[acyl-carrier-protein]: step 2/2. In terms of biological role, catalyzes the radical-mediated insertion of two sulfur atoms into the C-6 and C-8 positions of the octanoyl moiety bound to the lipoyl domains of lipoate-dependent enzymes, thereby converting the octanoylated domains into lipoylated derivatives. This is Lipoyl synthase from Frankia casuarinae (strain DSM 45818 / CECT 9043 / HFP020203 / CcI3).